A 101-amino-acid chain; its full sequence is Small ribosomal subunit protein uS14 (101 aa).

The protein belongs to the universal ribosomal protein uS14 family. Part of the 30S ribosomal subunit. Contacts proteins S3 and S10.

Binds 16S rRNA, required for the assembly of 30S particles and may also be responsible for determining the conformation of the 16S rRNA at the A site. The protein is Small ribosomal subunit protein uS14 of Methylorubrum populi (strain ATCC BAA-705 / NCIMB 13946 / BJ001) (Methylobacterium populi).